A 247-amino-acid polypeptide reads, in one-letter code: C-type lectin domain family 7 member A (247 aa).

Residues 1–44 (MEYHPDLENLDEDGYTQLHFDSRSNTRIAVVSEKGSCVASPPWR) lie on the Cytoplasmic side of the membrane. The short motif at 15–18 (YTQL) is the ITAM-like element. Residues 45–65 (LIAVILGILCLVILVIAVVLG) traverse the membrane as a helical; Signal-anchor for type II membrane protein segment. At 66–247 (TMAIWRPNSG…CSICEKKFSM (182 aa)) the chain is on the extracellular side. Residues 81–105 (NGYFPSRNKENHSQPTQSPLEESVT) form a disordered region. Residue Asn-91 is glycosylated (N-linked (GlcNAc...) asparagine). The segment covering 93–105 (SQPTQSPLEESVT) has biased composition (polar residues). 3 disulfides stabilise this stretch: Cys-120/Cys-131, Cys-148/Cys-241, and Cys-220/Cys-233. Positions 127–242 (YEKSCYLFSP…CSVPSCSICE (116 aa)) constitute a C-type lectin domain. 146 to 153 (RQCSQLGS) lines the (1,3-beta-D-glucosyl)n pocket. Residues Lys-157, Asp-159, and Glu-163 each contribute to the a divalent metal cation site. Position 195 (Glu-195) interacts with (1,3-beta-D-glucosyl)n. Glu-242 contributes to the a divalent metal cation binding site.

In terms of assembly, homodimer. Interacts with SYK; participates in leukocyte activation in presence of fungal pathogens. Interacts with CD37; this interaction controls CLEC7A-mediated IL-6 production. Phosphorylated on tyrosine residues in response to beta-glucan binding. In terms of tissue distribution, detected in dendritic cells, in paracortical and medullary regions of lymph nodes, and in spleen red pulp and white pulp.

The protein resides in the cell membrane. In terms of biological role, lectin that functions as a pattern recognizing receptor (PRR) specific for beta-1,3-linked and beta-1,6-linked glucans, which constitute cell wall constituents from pathogenic bacteria and fungi. Necessary for the TLR2-mediated inflammatory response and activation of NF-kappa-B: upon beta-glucan binding, recruits SYK via its ITAM motif and promotes a signaling cascade that activates some CARD domain-BCL10-MALT1 (CBM) signalosomes, leading to the activation of NF-kappa-B and MAP kinase p38 (MAPK11, MAPK12, MAPK13 and/or MAPK14) pathways which stimulate expression of genes encoding pro-inflammatory cytokines and chemokines. Enhances cytokine production in macrophages and dendritic cells. Mediates production of reactive oxygen species in the cell. Mediates phagocytosis of C.albicans conidia. Binds T-cells in a way that does not involve their surface glycans and plays a role in T-cell activation. Stimulates T-cell proliferation. Induces phosphorylation of SCIMP after binding beta-glucans. This Macaca mulatta (Rhesus macaque) protein is C-type lectin domain family 7 member A (CLEC7A).